We begin with the raw amino-acid sequence, 196 residues long: UPF0316 protein LBL_2483 (196 aa).

3 helical membrane-spanning segments follow: residues 12-32 (YCVL…IGTI), 44-64 (IAAS…TQVI), and 70-90 (ALCY…GMIL).

Belongs to the UPF0316 family.

Its subcellular location is the cell membrane. This chain is UPF0316 protein LBL_2483, found in Leptospira borgpetersenii serovar Hardjo-bovis (strain L550).